A 221-amino-acid polypeptide reads, in one-letter code: Phosphoribosylformylglycinamidine synthase subunit PurQ (221 aa).

One can recognise a Glutamine amidotransferase type-1 domain in the interval 2-221; it reads KTAVIQFPGS…VFESLKTVKK (220 aa). Cysteine 87 (nucleophile) is an active-site residue. Residues histidine 195 and glutamate 197 contribute to the active site.

Part of the FGAM synthase complex composed of 1 PurL, 1 PurQ and 2 PurS subunits.

Its subcellular location is the cytoplasm. The catalysed reaction is N(2)-formyl-N(1)-(5-phospho-beta-D-ribosyl)glycinamide + L-glutamine + ATP + H2O = 2-formamido-N(1)-(5-O-phospho-beta-D-ribosyl)acetamidine + L-glutamate + ADP + phosphate + H(+). It carries out the reaction L-glutamine + H2O = L-glutamate + NH4(+). It functions in the pathway purine metabolism; IMP biosynthesis via de novo pathway; 5-amino-1-(5-phospho-D-ribosyl)imidazole from N(2)-formyl-N(1)-(5-phospho-D-ribosyl)glycinamide: step 1/2. Its function is as follows. Part of the phosphoribosylformylglycinamidine synthase complex involved in the purines biosynthetic pathway. Catalyzes the ATP-dependent conversion of formylglycinamide ribonucleotide (FGAR) and glutamine to yield formylglycinamidine ribonucleotide (FGAM) and glutamate. The FGAM synthase complex is composed of three subunits. PurQ produces an ammonia molecule by converting glutamine to glutamate. PurL transfers the ammonia molecule to FGAR to form FGAM in an ATP-dependent manner. PurS interacts with PurQ and PurL and is thought to assist in the transfer of the ammonia molecule from PurQ to PurL. The sequence is that of Phosphoribosylformylglycinamidine synthase subunit PurQ from Deinococcus radiodurans (strain ATCC 13939 / DSM 20539 / JCM 16871 / CCUG 27074 / LMG 4051 / NBRC 15346 / NCIMB 9279 / VKM B-1422 / R1).